We begin with the raw amino-acid sequence, 657 residues long: N-acetylgalactosaminyltransferase 7 (657 aa).

Residues M1 to G6 are Cytoplasmic-facing. The chain crosses the membrane as a helical; Signal-anchor for type II membrane protein span at residues F7–T29. At P30 to V657 the chain is on the lumenal side. The disordered stretch occupies residues R31 to R65. 5 disulfide bridges follow: C197–C435, C426–C507, C545–C562, C585–C600, and C625–C640. A catalytic subdomain A region spans residues L206–P317. Substrate-binding residues include D247 and R277. Mn(2+) is bound by residues D301 and H303. Residues P381 to R443 form a catalytic subdomain B region. W412 provides a ligand contact to substrate. Residue H440 coordinates Mn(2+). Residue R443 coordinates substrate. The region spanning V532–N652 is the Ricin B-type lectin domain.

It belongs to the glycosyltransferase 2 family. GalNAc-T subfamily. Mn(2+) is required as a cofactor. Widely expressed. Expressed in uterus, retina, kidney, small intestine, omentum, stomach and CNS.

It is found in the golgi apparatus membrane. The catalysed reaction is L-seryl-[protein] + UDP-N-acetyl-alpha-D-galactosamine = a 3-O-[N-acetyl-alpha-D-galactosaminyl]-L-seryl-[protein] + UDP + H(+). It catalyses the reaction L-threonyl-[protein] + UDP-N-acetyl-alpha-D-galactosamine = a 3-O-[N-acetyl-alpha-D-galactosaminyl]-L-threonyl-[protein] + UDP + H(+). Its pathway is protein modification; protein glycosylation. Functionally, glycopeptide transferase involved in O-linked oligosaccharide biosynthesis, which catalyzes the transfer of an N-acetyl-D-galactosamine residue to an already glycosylated peptide. In contrast to other proteins of the family, it does not act as a peptide transferase that transfers GalNAc onto serine or threonine residue on the protein receptor, but instead requires the prior addition of a GalNAc on a peptide before adding additional GalNAc moieties. Some peptide transferase activity is however not excluded, considering that its appropriate peptide substrate may remain unidentified. This Homo sapiens (Human) protein is N-acetylgalactosaminyltransferase 7 (GALNT7).